Consider the following 93-residue polypeptide: RNA-binding protein Hfq (93 aa).

One can recognise a Sm domain in the interval 9–68 (DPFLNALRRERVPVSIYLVNGIKLQGQVESFDQFVILLKNTVSQMVYKHAISTVVPARPF). The interval 70 to 93 (VNSHTAAPSPAGGFNGQQDDNNDQ) is disordered.

This sequence belongs to the Hfq family. Homohexamer.

RNA chaperone that binds small regulatory RNA (sRNAs) and mRNAs to facilitate mRNA translational regulation in response to envelope stress, environmental stress and changes in metabolite concentrations. Also binds with high specificity to tRNAs. The polypeptide is RNA-binding protein Hfq (Shewanella sediminis (strain HAW-EB3)).